A 348-amino-acid chain; its full sequence is Ion-translocating oxidoreductase complex subunit D (348 aa).

Residues 1–22 (MAFFIASSPHLRSKRSTADVMR) are Cytoplasmic-facing. Transmembrane regions (helical) follow at residues 23–43 (WVLV…GYGT) and 44–64 (LIQL…IMLL). Residues 65-71 (RKRSPIS) lie on the Cytoplasmic side of the membrane. A helical transmembrane segment spans residues 72–91 (ALRDYSAVVTAWLLAVAIPP). Over 92–94 (LSP) the chain is Periplasmic. A helical transmembrane segment spans residues 95 to 117 (WWVVVIGLIFAIVIAKHLYGGLG). The Cytoplasmic segment spans residues 118–125 (QNPFNPAM). Residues 126–146 (IAYVVLLISFPVQMTSWMAPI) traverse the membrane as a helical segment. Over 147 to 213 (KLTAEPSSLV…ETLTQPQFSG (67 aa)) the chain is Periplasmic. Thr187 bears the FMN phosphoryl threonine mark. The helical transmembrane segment at 214–234 (FAGIGWEWVNIAYLLGGLILL) threads the bilayer. Over 235 to 242 (KLRIIRWH) the chain is Cytoplasmic. Residues 243-263 (IPVAMLAGLVFTALLAQLFAP) traverse the membrane as a helical segment. Topologically, residues 264–265 (GT) are periplasmic. The chain crosses the membrane as a helical span at residues 266-286 (TASPMIHLLSGATMLGAFFIA). The Cytoplasmic portion of the chain corresponds to 287–299 (TDPVSASTTDKGR). 2 helical membrane passes run 300 to 320 (LIYG…GGFP) and 321 to 341 (DGVA…DYYT). At 342–348 (KPRTYGH) the chain is on the cytoplasmic side.

Belongs to the NqrB/RnfD family. As to quaternary structure, the complex is composed of six subunits: RnfA, RnfB, RnfC, RnfD, RnfE and RnfG. The cofactor is FMN.

It is found in the cell inner membrane. Part of a membrane-bound complex that couples electron transfer with translocation of ions across the membrane. This is Ion-translocating oxidoreductase complex subunit D from Vibrio cholerae serotype O1 (strain ATCC 39541 / Classical Ogawa 395 / O395).